A 366-amino-acid polypeptide reads, in one-letter code: Zinc-regulated GTPase metalloprotein activator 1 (366 aa).

Residues 5-12 (DECPELVP) carry the psi-PxLVp motif motif. 31–38 (GYLGAGKT) serves as a coordination point for GTP. The Zn(2+) site is built by C89, C91, and C92. The CXCC motif motif lies at 89-92 (CLCC). GTP contacts are provided by residues 92–96 (CSVKD) and 185–188 (NKTD). Positions 258-357 (TITFEVPGSV…GEILKKEFIS (100 aa)) constitute a CobW C-terminal domain.

This sequence belongs to the SIMIBI class G3E GTPase family. ZNG1 subfamily.

It localises to the nucleus. The catalysed reaction is GTP + H2O = GDP + phosphate + H(+). Functionally, zinc chaperone that directly transfers zinc cofactor to target metalloproteins, thereby activating them. Catalyzes zinc insertion into the active site of methionine aminopeptidase METAP1, which function to cleave the initiator methionine from polypeptides during or after protein translation. Mechanistically, the N-terminal psi-PxLVp motif binds to the C6H2-type zinc finger of inactive form of METAP1. After formation of the docked complex, zinc is transferred from the CXCC motif in the GTPase domain of ZNG1 to the zinc binding site in the peptidase domain of METAP1 in a process requiring GTP hydrolysis. GTP/GDP exchange is required for release of active METAP1. This Danio rerio (Zebrafish) protein is Zinc-regulated GTPase metalloprotein activator 1.